A 507-amino-acid chain; its full sequence is Cytochrome P450 monooxygenase cloA (507 aa).

Residues 15–35 (WTWILLTTCIALTSPLVLKGI) traverse the membrane as a helical segment. N247 is a glycosylation site (N-linked (GlcNAc...) asparagine). C450 serves as a coordination point for heme.

The protein belongs to the cytochrome P450 family. Heme is required as a cofactor.

The protein localises to the membrane. Its pathway is alkaloid biosynthesis; ergot alkaloid biosynthesis. Its function is as follows. Cytochrome P450 monooxygenase; part of the gene cluster that mediates the biosynthesis of fungal ergot alkaloid. DmaW catalyzes the first step of ergot alkaloid biosynthesis by condensing dimethylallyl diphosphate (DMAP) and tryptophan to form 4-dimethylallyl-L-tryptophan. The second step is catalyzed by the methyltransferase easF that methylates 4-dimethylallyl-L-tryptophan in the presence of S-adenosyl-L-methionine, resulting in the formation of 4-dimethylallyl-L-abrine. The catalase easC and the FAD-dependent oxidoreductase easE then transform 4-dimethylallyl-L-abrine to chanoclavine-I which is further oxidized by easD in the presence of NAD(+), resulting in the formation of chanoclavine-I aldehyde. Agroclavine dehydrogenase easG then mediates the conversion of chanoclavine-I aldehyde to agroclavine via a non-enzymatic adduct reaction: the substrate is an iminium intermediate that is formed spontaneously from chanoclavine-I aldehyde in the presence of glutathione. The presence of easA is not required to complete this reaction. Further conversion of agroclavine to paspalic acid is a two-step process involving oxidation of agroclavine to elymoclavine and of elymoclavine to paspalic acid, the second step being performed by the elymoclavine oxidase cloA. Paspalic acid is then further converted to D-lysergic acid. Ergopeptines are assembled from D-lysergic acid and three different amino acids by the D-lysergyl-peptide-synthetases composed each of a monomudular and a trimodular nonribosomal peptide synthetase subunit. LpsB and lpsC encode the monomodular subunits responsible for D-lysergic acid activation and incorporation into the ergopeptine backbone. LpsA1 and A2 subunits encode the trimodular nonribosomal peptide synthetase assembling the tripeptide portion of ergopeptines. LpsA1 is responsible for formation of the major ergopeptine, ergotamine, and lpsA2 for alpha-ergocryptine, the minor ergopeptine of the total alkaloid mixture elaborated by C.purpurea. D-lysergyl-tripeptides are assembled by the nonribosomal peptide synthetases and released as N-(D-lysergyl-aminoacyl)-lactams. Cyclolization of the D-lysergyl-tripeptides is performed by the Fe(2+)/2-ketoglutarate-dependent dioxygenase easH which introduces a hydroxyl group into N-(D-lysergyl-aminoacyl)-lactam at alpha-C of the aminoacyl residue followed by spontaneous condensation with the terminal lactam carbonyl group. The chain is Cytochrome P450 monooxygenase cloA from Claviceps purpurea (Ergot fungus).